Here is a 580-residue protein sequence, read N- to C-terminus: Cis-3-hydroxy-L-proline dehydratase (580 aa).

Catalysis depends on Ser66, which acts as the Proton acceptor.

This sequence belongs to the AcnX family. In terms of assembly, monomer. Requires Fe(3+) as cofactor.

It carries out the reaction cis-3-hydroxy-L-proline = 1-pyrroline-2-carboxylate + H2O. With respect to regulation, inhibited by Zn(2+), Cd(2+) and Hg(2+), but not by Co(2+), Ni(2+), Mn(2+), Sr(2+), Mg(2+), or Fe(3+). Inhibited by pyrrole-2-carboxylate and its derivative 2-thiophenecarboxylate, but not by trans-aconitate, fluorocitrate and oxalomalate, which are typical inhibitors of the aconitase enzymes. Catalyzes the dehydration of cis-3-hydroxy-L-proline (c3LHyp) to Delta(1)-pyrroline-2-carboxylate (Pyr2C). Also has activity with (2S,3S,4R)-3,4-dihydroxyproline as substrate, albeit at about 300-fold lower rate. No activity with L-proline, trans-4-hydroxy-L-proline (t4LHyp), cis-4-hydroxy-L-proline (c4LHyp), trans-3-hydroxy-L-proline (t3LHyp), D-proline, cis-4-hydroxy-D-proline (c4DHyp), trans-4-hydroxy-D-proline (t4DHyp) or L-serine as substrates. No hydro-lyase activity with citrate or cis-acotinate. Does not catalyze 2-epimerization of c3LHyp to trans-3-hydroxy-D-proline (t3DHyp). Involved in a degradation pathway that converts c3LHyp to L-proline, which would allow P.aeruginosa to grow on c3LHyp as a sole carbon source. The protein is Cis-3-hydroxy-L-proline dehydratase of Pseudomonas aeruginosa (strain ATCC 15692 / DSM 22644 / CIP 104116 / JCM 14847 / LMG 12228 / 1C / PRS 101 / PAO1).